A 772-amino-acid chain; its full sequence is Uracil catabolism protein 2 (772 aa).

The disordered stretch occupies residues 1 to 70 (MDINSNASVS…KKPRKKRKTF (70 aa)). Basic and acidic residues predominate over residues 39–51 (HPEDSARAKERSE). Positions 59–69 (GNKKPRKKRKT) are enriched in basic residues. A DNA-binding region (zn(2)-C6 fungal-type) is located at residues 72-101 (CDTCRRVKTRCDFEPFIGKCYRCNVLQLDC).

This sequence belongs to the URC2 family.

Its subcellular location is the cytoplasm. It is found in the nucleus. Functionally, probable transcriptional activator involved in uracil catabolism. The sequence is that of Uracil catabolism protein 2 (URC2) from Saccharomyces cerevisiae (strain ATCC 204508 / S288c) (Baker's yeast).